The following is a 213-amino-acid chain: Iron sulfur cluster assembly protein 1, mitochondrial (213 aa).

This sequence belongs to the NifU family. As to quaternary structure, component of the core Fe-S cluster (ISC) assembly machinery. [2Fe-2S] cluster is required as a cofactor.

The protein localises to the mitochondrion matrix. It functions in the pathway cofactor biosynthesis; iron-sulfur cluster biosynthesis. Scaffold protein for the de novo synthesis of iron-sulfur (Fe-S) clusters within mitochondria, which is required for maturation of both mitochondrial and cytoplasmic [2Fe-2S] and [4Fe-4S] proteins. First, a [2Fe-2S] cluster is transiently assembled on the scaffold protein ISU1. In a second step, the cluster is released from ISU1, transferred to a glutaredoxin, followed by the formation of mitochondrial [2Fe-2S] proteins, the synthesis of [4Fe-4S] clusters and their target-specific insertion into the recipient apoproteins. Cluster assembly on ISU1 depends on the function of the cysteine desulfurase complex NFS1-ISD11, which serves as the sulfur donor for cluster synthesis, the iron-binding protein frataxin as the putative iron donor, and the electron transfer chain comprised of ferredoxin reductase and ferredoxin, which receive their electrons from NADH. The sequence is that of Iron sulfur cluster assembly protein 1, mitochondrial (ISU1) from Candida glabrata (strain ATCC 2001 / BCRC 20586 / JCM 3761 / NBRC 0622 / NRRL Y-65 / CBS 138) (Yeast).